A 488-amino-acid chain; its full sequence is Multidrug resistance outer membrane protein MdtP (488 aa).

The first 23 residues, Met1–Gly23, serve as a signal peptide directing secretion. Cys24 carries the N-palmitoyl cysteine lipid modification. Residue Cys24 is the site of S-diacylglycerol cysteine attachment.

This sequence belongs to the outer membrane factor (OMF) (TC 1.B.17) family. In terms of assembly, could be part of a tripartite efflux system composed of MdtN, MdtO and MdtP.

The protein localises to the cell outer membrane. Functionally, could be involved in resistance to puromycin, acriflavine and tetraphenylarsonium chloride. This chain is Multidrug resistance outer membrane protein MdtP (mdtP), found in Escherichia coli O6:H1 (strain CFT073 / ATCC 700928 / UPEC).